A 378-amino-acid polypeptide reads, in one-letter code: Quinolinate synthase (378 aa).

Iminosuccinate is bound by residues His-59 and Ser-80. Cys-125 is a binding site for [4Fe-4S] cluster. Iminosuccinate contacts are provided by residues 151-153 (YAN) and Ser-168. Cys-212 contacts [4Fe-4S] cluster. Residues 238-240 (HPE) and Thr-255 each bind iminosuccinate. Residue Cys-309 participates in [4Fe-4S] cluster binding.

It belongs to the quinolinate synthase family. Type 1 subfamily. The cofactor is [4Fe-4S] cluster.

It is found in the cytoplasm. The enzyme catalyses iminosuccinate + dihydroxyacetone phosphate = quinolinate + phosphate + 2 H2O + H(+). It functions in the pathway cofactor biosynthesis; NAD(+) biosynthesis; quinolinate from iminoaspartate: step 1/1. Catalyzes the condensation of iminoaspartate with dihydroxyacetone phosphate to form quinolinate. The polypeptide is Quinolinate synthase (Burkholderia cenocepacia (strain HI2424)).